Reading from the N-terminus, the 119-residue chain is Large ribosomal subunit protein uL18 (119 aa).

Belongs to the universal ribosomal protein uL18 family. In terms of assembly, part of the 50S ribosomal subunit; part of the 5S rRNA/L5/L18/L25 subcomplex. Contacts the 5S and 23S rRNAs.

Its function is as follows. This is one of the proteins that bind and probably mediate the attachment of the 5S RNA into the large ribosomal subunit, where it forms part of the central protuberance. The polypeptide is Large ribosomal subunit protein uL18 (Solibacter usitatus (strain Ellin6076)).